The primary structure comprises 521 residues: Vang-like protein 2-A (521 aa).

Positions 1–81 (MDNDSQYSGY…TTVVTGTSEH (81 aa)) are disordered. The Cytoplasmic portion of the chain corresponds to 1-108 (MDNDSQYSGY…AKLDCSRHLG (108 aa)). A compositionally biased stretch (basic residues) spans 15–33 (GHSRSSRKHRDRRERHRSK). The segment covering 57-67 (ESTRGEDRDDN) has biased composition (basic and acidic residues). Positions 69-81 (GETTTVVTGTSEH) are enriched in low complexity. A helical transmembrane segment spans residues 109–129 (VVIGGALALLSFLTPIAFMLL). The Extracellular segment spans residues 130–147 (PQILWREDLEQCGTACEG). Residues 148–168 (LFISVAFKLLILLLGSWALFF) form a helical membrane-spanning segment. The Cytoplasmic portion of the chain corresponds to 169 to 178 (RRPKAFFPRV). Residues 179 to 199 (FVFRALLMVLVFLLVVSYWLF) form a helical membrane-spanning segment. At 200 to 218 (YGVRILESRDKNYQGIVQY) the chain is on the extracellular side. Residues 219–239 (AVSLVDALLFVHYLAVVLLEL) form a helical membrane-spanning segment. Over 240–521 (RQLQPQFTIK…VMRLQSETSV (282 aa)) the chain is Cytoplasmic. Residues 518 to 521 (ETSV) carry the PDZ-binding motif.

This sequence belongs to the Vang family. As to quaternary structure, interacts with dvl/dsh. Interacts with prickle3. As to expression, during gastrulation, broadly expressed throughout the marginal zone and animal cap region. From the neurula stages, expression becomes concentrated in neural tissues, in the neural plate and neural tube.

Its subcellular location is the cell membrane. Has a role in non-canonical Wnt/planar cell polarity (PCP) signaling; can recruit dvl/dsh and prickle from the cytoplasm to the plasma membrane. Acts in a PCP complex to regulate the polarized assembly of fibronectrin on the surface of the mesoderm during gastrulation. Regulates convergent extension cell movements in both dorsal mesoderm and neural tissue during gastrulation, without affecting cell fate. Regulates neural fold closure during neurulation. May be required for cell surface localization of fzd3 and fzd6 in the inner ear. This is Vang-like protein 2-A (vangl2-a) from Xenopus laevis (African clawed frog).